A 208-amino-acid chain; its full sequence is Uracil phosphoribosyltransferase (208 aa).

Residues Arg-78, Arg-103, and 130 to 138 (DPMFATGGT) contribute to the 5-phospho-alpha-D-ribose 1-diphosphate site. Uracil-binding positions include Ile-193 and 198–200 (GDA). Asp-199 is a 5-phospho-alpha-D-ribose 1-diphosphate binding site.

The protein belongs to the UPRTase family. It depends on Mg(2+) as a cofactor.

It catalyses the reaction UMP + diphosphate = 5-phospho-alpha-D-ribose 1-diphosphate + uracil. It participates in pyrimidine metabolism; UMP biosynthesis via salvage pathway; UMP from uracil: step 1/1. Its activity is regulated as follows. Allosterically activated by GTP. Functionally, catalyzes the conversion of uracil and 5-phospho-alpha-D-ribose 1-diphosphate (PRPP) to UMP and diphosphate. The polypeptide is Uracil phosphoribosyltransferase (Campylobacter jejuni (strain RM1221)).